Consider the following 172-residue polypeptide: Translationally-controlled tumor protein (172 aa).

In terms of domain architecture, TCTP spans 1-172; that stretch reads MIIYRDLISH…FKDGLEMEKC (172 aa). Phosphoserine; by PLK1 is present on serine 46. The residue at position 53 (serine 53) is a Phosphoserine. At serine 64 the chain carries Phosphoserine; by PLK1. The segment at 70-172 is required for reduction of TSC22D1 protein stability; that stretch reads VDIVMNHHLQ…FKDGLEMEKC (103 aa).

It belongs to the TCTP family. As to quaternary structure, homodimer. Interacts with STEAP3. Interacts with TSC22D1; interaction results in the destabilization of TSC22D1 protein.

It localises to the cytoplasm. Its function is as follows. Involved in calcium binding and microtubule stabilization. Acts as a negative regulator of TSC22D1-mediated apoptosis, via interaction with and destabilization of TSC22D1 protein. In Bos taurus (Bovine), this protein is Translationally-controlled tumor protein (TPT1).